The following is a 430-amino-acid chain: Glutamate-1-semialdehyde 2,1-aminomutase (430 aa).

An N6-(pyridoxal phosphate)lysine modification is found at K265.

It belongs to the class-III pyridoxal-phosphate-dependent aminotransferase family. HemL subfamily. The cofactor is pyridoxal 5'-phosphate.

It is found in the cytoplasm. The enzyme catalyses (S)-4-amino-5-oxopentanoate = 5-aminolevulinate. The protein operates within porphyrin-containing compound metabolism; protoporphyrin-IX biosynthesis; 5-aminolevulinate from L-glutamyl-tRNA(Glu): step 2/2. The chain is Glutamate-1-semialdehyde 2,1-aminomutase from Caldivirga maquilingensis (strain ATCC 700844 / DSM 13496 / JCM 10307 / IC-167).